Here is a 272-residue protein sequence, read N- to C-terminus: Putative phosphoenolpyruvate synthase regulatory protein (272 aa).

152–159 (GVSRCGKT) contacts ADP.

This sequence belongs to the pyruvate, phosphate/water dikinase regulatory protein family. PSRP subfamily.

It carries out the reaction [pyruvate, water dikinase] + ADP = [pyruvate, water dikinase]-phosphate + AMP + H(+). The enzyme catalyses [pyruvate, water dikinase]-phosphate + phosphate + H(+) = [pyruvate, water dikinase] + diphosphate. Its function is as follows. Bifunctional serine/threonine kinase and phosphorylase involved in the regulation of the phosphoenolpyruvate synthase (PEPS) by catalyzing its phosphorylation/dephosphorylation. This is Putative phosphoenolpyruvate synthase regulatory protein from Stutzerimonas stutzeri (strain A1501) (Pseudomonas stutzeri).